We begin with the raw amino-acid sequence, 170 residues long: Adenine phosphoribosyltransferase (170 aa).

This sequence belongs to the purine/pyrimidine phosphoribosyltransferase family. In terms of assembly, homodimer.

The protein localises to the cytoplasm. The catalysed reaction is AMP + diphosphate = 5-phospho-alpha-D-ribose 1-diphosphate + adenine. It participates in purine metabolism; AMP biosynthesis via salvage pathway; AMP from adenine: step 1/1. Catalyzes a salvage reaction resulting in the formation of AMP, that is energically less costly than de novo synthesis. The polypeptide is Adenine phosphoribosyltransferase (Streptococcus pneumoniae (strain Hungary19A-6)).